The following is a 3434-amino-acid chain: MSKKPGGPGRNRAINMLKRGIPRVFPLVGVKRVVMGLLDGRGPVRFVLALMTFFKFTALAPTKALLGRWKRINKTTAMKHLTSFKKELGTMINVVNNRGTKKKRGNNGPGLVMIITLMTVVSMVSSLKLSNFQGKVMMTINATDMADVIVVPTQHGKNQCWIRAMDVGYMCDDTITYECPKLDAGNDPEDIDCWCDKQPMYVHYGRCTRTRHSKRSRRSIAVQTHGESMLANKKDAWLDSTKASRYLMKTENWIIRNPGYAFVAVLLGWMLGSNNGQRVVFVVLLLLVAPAYSFNCLGMSNRDFLEGVSGATWVDVVLEGDSCITIMAKDKPTIDIKMMETEATNLAEVRSYCYLATVSDVSTVSNCPTTGEAHNPKRAEDTYVCKSGVTDRGWGNGCGLFGKGSIDTCANFTCSLKAMGRMIQPENVKYEVGIFIHGSTSSDTHGNYSSQLGASQAGRFTITPNSPAITVKMGDYGEISVECEPRNGLNTEAYYIMSVGTKHFLVHREWFNDLALPWTSPASSNWRNREILLEFEEPHATKQSVVALGSQEGALHQALAGAVPVSFSGSVKLTSGHLKCRVKMEKLTLKGTTYGMCTEKFSFAKNPADTGHGTVVLELQYTGSDGPCKIPISIVASLSDLTPIGRMVTANPYVASSEANAKVLVEMEPPFGDSYIVVGRGDKQINHHWHKAGSSIGKAFITTIKGAQRLAALGDTAWDFGSVGGIFNSVGKAVHQVFGGAFRTLFGGMSWITQGLMGALLLWMGVNARDRSIALVMLATGGVLLFLATNVHADSGCAIDVGRRELRCGQGIFIHNDVEAWVDRYKFMPETPKQLAKVIEQAHAKGICGLRSVSRLEHVMWENIRDELNTLLRENAVDLSVVVEKPKGMYKSAPQRLALTSEEFEIGWKAWGKSLVFAPELANHTFVVDGPETKECPDAKRAWNSLEIEDFGFGIMSTRVWLKVREHNTTDCDSSIIGTAVKGDIAVHSDLSYWIESHKNTTWRLERAVFGEIKSCTWPETHTLWSDGVVESDLVVPVTLAGPKSNHNRREGYKVQSQGPWDEEDIVLDFDYCPGTTVTITEACGKRGPSIRTTTSSGRLVTDWCCRSCTLPPLRYRTKNGCWYGMEIRPMKHDETTLVKSSVSAHRSDMIDPFQLGLLVMFLATQEVLRKRWTARLTVPAIVGALLVLILGGITYTDLLRYVLLVGAAFAEANSGGDVVHLALIAAFKIQPGFLAMTFLRGKWTNQENILLALGAAFFQMAATDLNFSLPGILNATATAWMLLRAATQPSTSAIVMPLLCLLAPGMRLLYLDTYRITLIIIGICSLIGERRRAAAKKKGAVLLGLALTSTGQFSASVMAAGLMACNPNKKRGWPATEVLTAVGLMFAIVGGLAELDVDSMSIPFVLAGLMAVSYTISGKSTDLWLERAADITWETDAAITGTSQRLDVKLDDDGDFHLINDPGVPWKIWVIRMTALGFAAWTPWAIIPAGIGYWLTVKYAKRGGVFWDTPAPRTYPKGDTSPGVYRIMSRYILGTYQAGVGVMYEGVLHTLWHTTRGAAIRSGEGRLTPYWGSVKEDRITYGGPWKFDRKWNGLDDVQLIIVAPGKAAINIQTKPGIFKTPQGEIGAVSLDYPEGTSGSPILDKNGDIVGLYGNGVILGNGSYVSAIVQGEREEEPVPEAYNADMLRKKQLTVLDLHPGAGKTRRILPQIIKDAIQRRLRTAVLAPTRVVAAEMAEALKGLPVRYLTPAVNREHSGTEIVDVMCHATLTHRLMSPLRAPNYNLFVMDEAHFTDPASIAARGYIATKVELGEAAAIFMTATPPGTHDPFPDTNAPVTDIQAEVPDRAWSSGFEWITEYTGKTVWFVASVKMGNEIAQCLQRAGKKVIQLNRKSYDTEYPKCKNGDWDFVITTDISEMGANFGASRVIDCRKSVKPTILEEGEGRVILSNPSPITSASAAQRRGRVGRNPSQIGDEYHYGGGTSEDDTIAAHWTEAKIMLDNIHLPNGLVAQMYGPERDKAFTMDGEYRLRGEERKTFLELLRTADLPVWLAYKVASNGIQYTDRKWCFDGPRSNIILEDNNEVEIVTRTGERKMLKPRWLDARVYADHQSLKWFKDFAAGKRSAVGFLEVLGRMPEHFAGKTREAFDTMYLVATAEKGGKAHRMALEELPDALETITLIVALAVMTAGVFLLLVQRRGIGKLGLGGMVLGLATFFLWMADVSGTKIAGTLLLALLMMIVLIPEPEKQRSQTDNQLAVFLICVLLVVGVVAANEYGMLERTKSDLGKIFSSTRQPQSALPLPSMNALALDLRPATAWALYGGSTVVLTPLIKHLVTSEYITTSLASISAQAGSLFNLPRGLPFTELDFTVVLVFLGCWGQVSLTTLITAAALATLHYGYMLPGWQAEALRAAQRRTAAGIMKNAVVDGLVATDVPELERTTPLMQKKVGQILLIGVSAAALLVNPCVTTVREAGILISAALLTLWDNGAIAVWNSTTATGLCHVIRGNWLAGASIAWTLIKNADKPACKRGRPGGRTLGEQWKEKLNGLSKEDFLKYRKEAITEVDRSAARKARRDGNKTGGHPVSRGSAKLRWMVERQFVKPIGKVVDLGCGRGGWSYYAATLKGVQEVRGYTKGGPGHEEPMLMQSYGWNLVTMKSGVDVYYKPSEPCDTLFCDIGESSSSAEVEEQRTLRILEMVSDWLQRGPREFCIKVLCPYMPRVMERLEVLQRRYGGGLVRVPLSRNSNHEMYWVSGAAGNIVHAVNMTSQVLIGRMEKRTWHGPKYEEDVNLGSGTRAVGKPQPHTNQEKIKARIQRLKEEYAATWHHDKDHPYRTWTYHGSYEVKPTGSASSLVNGVVRLMSKPWDAILNVTTMAMTDTTPFGQQRVFKEKVDTKAPEPPSGVREVMDETTNWLWAFLAREKKPRLCTREEFKRKVNSNAALGAMFEEQNQWSSAREAVEDPRFWEMVDEERENHLKGECHTCIYNMMGKREKKLGEFGKAKGSRAIWFMWLGARFLEFEALGFLNEDHWLGRKNSGGGVEGLGVQKLGYILREMSHHSGGKMYADDTAGWDTRITRADLDNEAKVLELMEGEHRQLARAIIELTYKHKVVKVMRPGTDGKTVMDVISREDQRGSGQVVTYALNTFTNIAVQLIRLMEAEGVIGQEHLESLPRKTKYAVRTWLFENGEERVTRMAVSGDDCVVKPLDDRFANALHFLNSMSKVRKDVPEWKPSSGWHDWQQVPFCSNHFQELIMKDGRTLVVPCRGQDELIGRARVSPGSGWNVRDTACLAKAYAQMWLLLYFHRRDLRLMANAICSAVPSNWVPTGRTSWSVHATGEWMTTDDMLEVWNKVWIQDNEWMLDKTPVQSWTDIPYTGKREDIWCGSLIGTRTRATWAENIYAAINQVRAIIGQEKYRDYMLSLRRYEEVNVQEDRVL.

Residues 1-106 (MSKKPGGPGR…NRGTKKKRGN (106 aa)) lie on the Cytoplasmic side of the membrane. Residues 2-15 (SKKPGGPGRNRAIN) form an interaction with host EXOC1 region. Positions 37–72 (LLDGRGPVRFVLALMTFFKFTALAPTKALLGRWKRI) are hydrophobic; homodimerization of capsid protein C. Residues 105–126 (GNNGPGLVMIITLMTVVSMVSS) constitute a propeptide, ER anchor for the capsid protein C, removed in mature form by serine protease NS3. The chain crosses the membrane as a helical span at residues 107–126 (NGPGLVMIITLMTVVSMVSS). Over 127–248 (LKLSNFQGKV…DSTKASRYLM (122 aa)) the chain is Extracellular. N-linked (GlcNAc...) asparagine; by host glycosylation occurs at asparagine 141. Residues 249-273 (KTENWIIRNPGYAFVAVLLGWMLGS) traverse the membrane as a helical segment. At 274 to 278 (NNGQR) the chain is on the cytoplasmic side. A helical transmembrane segment spans residues 279-293 (VVFVVLLLLVAPAYS). Topologically, residues 294 to 745 (FNCLGMSNRD…QVFGGAFRTL (452 aa)) are extracellular. Disulfide bonds link cysteine 296/cysteine 323, cysteine 353/cysteine 409, cysteine 353/cysteine 414, cysteine 367/cysteine 398, cysteine 385/cysteine 409, cysteine 385/cysteine 414, cysteine 483/cysteine 580, and cysteine 597/cysteine 628. Residues 391–404 (DRGWGNGCGLFGKG) are fusion peptide. The helical transmembrane segment at 746–766 (FGGMSWITQGLMGALLLWMGV) threads the bilayer. Residues 767–772 (NARDRS) lie on the Cytoplasmic side of the membrane. The chain crosses the membrane as a helical span at residues 773 to 793 (IALVMLATGGVLLFLATNVHA). Residues 794–1218 (DSGCAIDVGR…AFAEANSGGD (425 aa)) are Extracellular-facing. 2 disulfides stabilise this stretch: cysteine 797/cysteine 808 and cysteine 848/cysteine 936. Residues asparagine 923, asparagine 968, and asparagine 1000 are each glycosylated (N-linked (GlcNAc...) asparagine; by host). Cystine bridges form between cysteine 972-cysteine 1016, cysteine 1073-cysteine 1122, cysteine 1084-cysteine 1105, cysteine 1084-cysteine 1106, cysteine 1105-cysteine 1109, and cysteine 1106-cysteine 1109. A helical membrane pass occupies residues 1219-1239 (VVHLALIAAFKIQPGFLAMTF). Residues 1240–1249 (LRGKWTNQEN) are Cytoplasmic-facing. Residues 1250-1270 (ILLALGAAFFQMAATDLNFSL) traverse the membrane as a helical segment. Topologically, residues 1271–1286 (PGILNATATAWMLLRA) are lumenal. Residues 1287-1307 (ATQPSTSAIVMPLLCLLAPGM) form a helical membrane-spanning segment. Position 1308 (arginine 1308) is a topological domain, cytoplasmic. A helical membrane pass occupies residues 1309-1329 (LLYLDTYRITLIIIGICSLIG). Residues 1330-1340 (ERRRAAAKKKG) lie on the Lumenal side of the membrane. A helical membrane pass occupies residues 1341-1361 (AVLLGLALTSTGQFSASVMAA). Topologically, residues 1362-1373 (GLMACNPNKKRG) are cytoplasmic. A helical transmembrane segment spans residues 1374 to 1394 (WPATEVLTAVGLMFAIVGGLA). Residues 1395 to 1397 (ELD) lie on the Lumenal side of the membrane. The chain crosses the membrane as a helical span at residues 1398–1418 (VDSMSIPFVLAGLMAVSYTIS). Residues 1419 to 1475 (GKSTDLWLERAADITWETDAAITGTSQRLDVKLDDDGDFHLINDPGVPWKIWVIRMT) lie on the Cytoplasmic side of the membrane. The interval 1426–1465 (LERAADITWETDAAITGTSQRLDVKLDDDGDFHLINDPGV) is interacts with and activates NS3 protease. The helical intramembrane region spans 1476–1496 (ALGFAAWTPWAIIPAGIGYWL). Topologically, residues 1497–2173 (TVKYAKRGGV…MALEELPDAL (677 aa)) are cytoplasmic. The Peptidase S7 domain maps to 1504 to 1681 (GGVFWDTPAP…EREEEPVPEA (178 aa)). Active-site charge relay system; for serine protease NS3 activity residues include histidine 1554, aspartate 1578, and serine 1638. The Helicase ATP-binding domain occupies 1684 to 1840 (ADMLRKKQLT…DTNAPVTDIQ (157 aa)). Residues 1688–1691 (RKKQ) are important for RNA-binding. Position 1697–1704 (1697–1704 (LHPGAGKT)) interacts with ATP. A DEAH box motif is present at residues 1788–1791 (DEAH). Residues 1851 to 2016 (GFEWITEYTG…GLVAQMYGPE (166 aa)) enclose the Helicase C-terminal domain. The residue at position 1892 (lysine 1892) is an N6-acetyllysine; by host. The tract at residues 1956 to 1980 (ASAAQRRGRVGRNPSQIGDEYHYGG) is disordered. The segment at 2167-2171 (EELPD) is regulates the ATPase activity of NS3 helicase. Residues 2174-2194 (ETITLIVALAVMTAGVFLLLV) traverse the membrane as a helical segment. The Lumenal portion of the chain corresponds to 2195 to 2198 (QRRG). Positions 2199 to 2219 (IGKLGLGGMVLGLATFFLWMA) form an intramembrane region, helical. Aspartate 2220 is a topological domain (lumenal). A helical membrane pass occupies residues 2221–2241 (VSGTKIAGTLLLALLMMIVLI). Over 2242–2256 (PEPEKQRSQTDNQLA) the chain is Cytoplasmic. A helical membrane pass occupies residues 2257–2277 (VFLICVLLVVGVVAANEYGML). The Lumenal segment spans residues 2278-2313 (ERTKSDLGKIFSSTRQPQSALPLPSMNALALDLRPA). The segment at residues 2314–2334 (TAWALYGGSTVVLTPLIKHLV) is an intramembrane region (helical). The Lumenal segment spans residues 2335-2368 (TSEYITTSLASISAQAGSLFNLPRGLPFTELDFT). A helical membrane pass occupies residues 2369 to 2389 (VVLVFLGCWGQVSLTTLITAA). Topologically, residues 2390-2446 (ALATLHYGYMLPGWQAEALRAAQRRTAAGIMKNAVVDGLVATDVPELERTTPLMQKK) are cytoplasmic. A helical transmembrane segment spans residues 2447–2467 (VGQILLIGVSAAALLVNPCVT). Residues 2468-2471 (TVRE) lie on the Lumenal side of the membrane. Residues 2472–2492 (AGILISAALLTLWDNGAIAVW) form a helical membrane-spanning segment. The Cytoplasmic segment spans residues 2493 to 3434 (NSTTATGLCH…EVNVQEDRVL (942 aa)). An mRNA cap 0-1 NS5-type MT domain is found at 2530–2795 (GRPGGRTLGE…DVNLGSGTRA (266 aa)). Residues 2567–2587 (SAARKARRDGNKTGGHPVSRG) are disordered. An S-adenosyl-L-methionine-binding site is contributed by serine 2585. At serine 2585 the chain carries Phosphoserine. Catalysis depends on lysine 2590, which acts as the For 2'-O-MTase activity. The S-adenosyl-L-methionine site is built by glycine 2615, tryptophan 2616, threonine 2633, lysine 2634, aspartate 2660, and valine 2661. The For 2'-O-MTase activity role is filled by aspartate 2675. Isoleucine 2676 is an S-adenosyl-L-methionine binding site. Residues lysine 2711 and glutamate 2747 each act as for 2'-O-MTase activity in the active site. An S-adenosyl-L-methionine-binding site is contributed by tyrosine 2749. Residues glutamate 2969, histidine 2973, cysteine 2978, and cysteine 2981 each contribute to the Zn(2+) site. The RdRp catalytic domain maps to 3059 to 3211 (GKMYADDTAG…KPLDDRFANA (153 aa)). The Zn(2+) site is built by histidine 3246, cysteine 3262, and cysteine 3381.

This sequence in the N-terminal section; belongs to the class I-like SAM-binding methyltransferase superfamily. mRNA cap 0-1 NS5-type methyltransferase family. Homodimer. Interacts (via N-terminus) with host EXOC1 (via C-terminus); this interaction results in EXOC1 degradation through the proteasome degradation pathway. In terms of assembly, forms heterodimers with envelope protein E in the endoplasmic reticulum and Golgi. As to quaternary structure, homodimer; in the endoplasmic reticulum and Golgi. Interacts with protein prM. Interacts with non-structural protein 1. Homodimer; Homohexamer when secreted. Interacts with envelope protein E. NS1 interacts with NS4B. Interacts with host complement protein CFH; this interaction leads to the degradation of C3. In terms of assembly, interacts (via N-terminus) with serine protease NS3. As to quaternary structure, forms a heterodimer with serine protease NS3. May form homooligomers. Forms a heterodimer with NS2B. Interacts with non-structural protein 2A (via N-terminus). Interacts with NS4B. Interacts with unphosphorylated RNA-directed RNA polymerase NS5; this interaction stimulates RNA-directed RNA polymerase NS5 guanylyltransferase activity. In terms of assembly, interacts with serine protease NS3. As to quaternary structure, homodimer. Interacts with host STAT2; this interaction inhibits the phosphorylation of the latter, and, when all viral proteins are present (polyprotein), targets STAT2 for degradation. Interacts with serine protease NS3. Specific enzymatic cleavages in vivo yield mature proteins. Cleavages in the lumen of endoplasmic reticulum are performed by host signal peptidase, whereas cleavages in the cytoplasmic side are performed by serine protease NS3. Signal cleavage at the 2K-4B site requires a prior NS3 protease-mediated cleavage at the 4A-2K site. Post-translationally, cleaved in post-Golgi vesicles by a host furin, releasing the mature small envelope protein M, and peptide pr. This cleavage is incomplete as up to 30% of viral particles still carry uncleaved prM. In terms of processing, N-glycosylated. N-glycosylated. The excreted form is glycosylated and this is required for efficient secretion of the protein from infected cells. Post-translationally, acetylated by host KAT5. Acetylation modulates NS3 RNA-binding and unwinding activities and plays an important positive role for viral replication. In terms of processing, phosphorylated on serines residues. This phosphorylation may trigger NS5 nuclear localization.

The protein resides in the virion. It is found in the host nucleus. Its subcellular location is the host cytoplasm. The protein localises to the host perinuclear region. It localises to the secreted. The protein resides in the virion membrane. It is found in the host endoplasmic reticulum membrane. It catalyses the reaction Selective hydrolysis of -Xaa-Xaa-|-Yaa- bonds in which each of the Xaa can be either Arg or Lys and Yaa can be either Ser or Ala.. It carries out the reaction RNA(n) + a ribonucleoside 5'-triphosphate = RNA(n+1) + diphosphate. The catalysed reaction is a ribonucleoside 5'-triphosphate + H2O = a ribonucleoside 5'-diphosphate + phosphate + H(+). The enzyme catalyses ATP + H2O = ADP + phosphate + H(+). It catalyses the reaction a 5'-end (5'-triphosphoguanosine)-ribonucleoside in mRNA + S-adenosyl-L-methionine = a 5'-end (N(7)-methyl 5'-triphosphoguanosine)-ribonucleoside in mRNA + S-adenosyl-L-homocysteine. It carries out the reaction a 5'-end (N(7)-methyl 5'-triphosphoguanosine)-ribonucleoside in mRNA + S-adenosyl-L-methionine = a 5'-end (N(7)-methyl 5'-triphosphoguanosine)-(2'-O-methyl-ribonucleoside) in mRNA + S-adenosyl-L-homocysteine + H(+). In terms of biological role, plays a role in virus budding by binding to the cell membrane and gathering the viral RNA into a nucleocapsid that forms the core of a mature virus particle. During virus entry, may induce genome penetration into the host cytoplasm after hemifusion induced by the surface proteins. Can migrate to the cell nucleus where it modulates host functions. Overcomes the anti-viral effects of host EXOC1 by sequestering and degrading the latter through the proteasome degradation pathway. Inhibits RNA silencing by interfering with host Dicer. Functionally, prevents premature fusion activity of envelope proteins in trans-Golgi by binding to envelope protein E at pH6.0. After virion release in extracellular space, gets dissociated from E dimers. Its function is as follows. Acts as a chaperone for envelope protein E during intracellular virion assembly by masking and inactivating envelope protein E fusion peptide. prM is the only viral peptide matured by host furin in the trans-Golgi network probably to avoid catastrophic activation of the viral fusion activity in acidic Golgi compartment prior to virion release. prM-E cleavage is inefficient, and many virions are only partially matured. These uncleaved prM would play a role in immune evasion. In terms of biological role, may play a role in virus budding. Exerts cytotoxic effects by activating a mitochondrial apoptotic pathway through M ectodomain. May display a viroporin activity. Binds to host cell surface receptor and mediates fusion between viral and cellular membranes. Envelope protein is synthesized in the endoplasmic reticulum in the form of heterodimer with protein prM. They play a role in virion budding in the ER, and the newly formed immature particle is covered with 60 spikes composed of heterodimer between precursor prM and envelope protein E. The virion is transported to the Golgi apparatus where the low pH causes dissociation of PrM-E heterodimers and formation of E homodimers. prM-E cleavage is inefficient, and many virions are only partially matured. These uncleaved prM would play a role in immune evasion. Functionally, involved in immune evasion, pathogenesis and viral replication. Once cleaved off the polyprotein, is targeted to three destinations: the viral replication cycle, the plasma membrane and the extracellular compartment. Essential for viral replication. Required for formation of the replication complex and recruitment of other non-structural proteins to the ER-derived membrane structures. Excreted as a hexameric lipoparticle that plays a role against host immune response. Antagonizing the complement function. Binds to the host macrophages and dendritic cells. Inhibits signal transduction originating from Toll-like receptor 3 (TLR3). Its function is as follows. Component of the viral RNA replication complex that functions in virion assembly and antagonizes the host alpha/beta interferon antiviral response. In terms of biological role, required cofactor for the serine protease function of NS3. May have membrane-destabilizing activity and form viroporins. Displays three enzymatic activities: serine protease, NTPase and RNA helicase. NS3 serine protease, in association with NS2B, performs its autocleavage and cleaves the polyprotein at dibasic sites in the cytoplasm: C-prM, NS2A-NS2B, NS2B-NS3, NS3-NS4A, NS4A-2K and NS4B-NS5. NS3 RNA helicase binds RNA and unwinds dsRNA in the 3' to 5' direction. Functionally, regulates the ATPase activity of the NS3 helicase activity. NS4A allows NS3 helicase to conserve energy during unwinding. Its function is as follows. Functions as a signal peptide for NS4B and is required for the interferon antagonism activity of the latter. In terms of biological role, induces the formation of ER-derived membrane vesicles where the viral replication takes place. Inhibits interferon (IFN)-induced host STAT1 phosphorylation and nuclear translocation, thereby preventing the establishment of cellular antiviral state by blocking the IFN-alpha/beta pathway. Inhibits STAT2 translocation in the nucleus after IFN-alpha treatment. Replicates the viral (+) and (-) RNA genome, and performs the capping of genomes in the cytoplasm. NS5 methylates viral RNA cap at guanine N-7 and ribose 2'-O positions. Besides its role in RNA genome replication, also prevents the establishment of cellular antiviral state by blocking the interferon-alpha/beta (IFN-alpha/beta) signaling pathway. Inhibits host TYK2 and STAT2 phosphorylation, thereby preventing activation of JAK-STAT signaling pathway. The protein is Genome polyprotein of Usutu virus (USUV).